The primary structure comprises 153 residues: MLKTIKIFSDGSCLGNPGPGGYSFIIQHLEYENISSSGFYLTTNNRMELMGIIVATESLKQPCCITISTDSQYVQKGILYWIKNWKTKGWKTSRKTYVKNVDLWLRLEKSLNLHQVTWKWIKSHSGNKKNEQCDHLARESAKFPTLKDFGYIL.

Residues 1–142 (MLKTIKIFSD…CDHLARESAK (142 aa)) enclose the RNase H type-1 domain. Mg(2+) contacts are provided by D10, E48, D70, and D134.

This sequence belongs to the RNase H family. Monomer. Requires Mg(2+) as cofactor.

It is found in the cytoplasm. It catalyses the reaction Endonucleolytic cleavage to 5'-phosphomonoester.. Its function is as follows. Endonuclease that specifically degrades the RNA of RNA-DNA hybrids. The polypeptide is Ribonuclease H (Buchnera aphidicola subsp. Baizongia pistaciae (strain Bp)).